A 232-amino-acid polypeptide reads, in one-letter code: Large ribosomal subunit protein uL1 (232 aa).

The protein belongs to the universal ribosomal protein uL1 family. Part of the 50S ribosomal subunit.

Binds directly to 23S rRNA. The L1 stalk is quite mobile in the ribosome, and is involved in E site tRNA release. In terms of biological role, protein L1 is also a translational repressor protein, it controls the translation of the L11 operon by binding to its mRNA. The polypeptide is Large ribosomal subunit protein uL1 (Cutibacterium acnes (strain DSM 16379 / KPA171202) (Propionibacterium acnes)).